We begin with the raw amino-acid sequence, 283 residues long: Bifunctional protein FolD 1 (283 aa).

NADP(+) is bound by residues 166–168 (GRS) and Ile-232.

Belongs to the tetrahydrofolate dehydrogenase/cyclohydrolase family. In terms of assembly, homodimer.

The enzyme catalyses (6R)-5,10-methylene-5,6,7,8-tetrahydrofolate + NADP(+) = (6R)-5,10-methenyltetrahydrofolate + NADPH. It carries out the reaction (6R)-5,10-methenyltetrahydrofolate + H2O = (6R)-10-formyltetrahydrofolate + H(+). It functions in the pathway one-carbon metabolism; tetrahydrofolate interconversion. Functionally, catalyzes the oxidation of 5,10-methylenetetrahydrofolate to 5,10-methenyltetrahydrofolate and then the hydrolysis of 5,10-methenyltetrahydrofolate to 10-formyltetrahydrofolate. The chain is Bifunctional protein FolD 1 from Lactobacillus johnsonii (strain CNCM I-12250 / La1 / NCC 533).